The following is a 93-amino-acid chain: Small ribosomal subunit protein uS15 (93 aa).

The protein belongs to the universal ribosomal protein uS15 family. In terms of assembly, part of the 30S ribosomal subunit. Forms a bridge to the 50S subunit in the 70S ribosome, contacting the 23S rRNA.

Functionally, one of the primary rRNA binding proteins, it binds directly to 16S rRNA where it helps nucleate assembly of the platform of the 30S subunit by binding and bridging several RNA helices of the 16S rRNA. Forms an intersubunit bridge (bridge B4) with the 23S rRNA of the 50S subunit in the ribosome. The polypeptide is Small ribosomal subunit protein uS15 (Ehrlichia chaffeensis (strain ATCC CRL-10679 / Arkansas)).